The chain runs to 36 residues: MTGSYLPSILVPLVGIIFPGISMALLFIYIEEENIS.

The chain crosses the membrane as a helical span at residues Pro7–Tyr29.

Belongs to the PsaI family.

It is found in the plastid. It localises to the chloroplast thylakoid membrane. In terms of biological role, may help in the organization of the PsaL subunit. This Gracilaria tenuistipitata var. liui (Red alga) protein is Photosystem I reaction center subunit VIII.